Here is a 255-residue protein sequence, read N- to C-terminus: Trans-aconitate 2-methyltransferase (255 aa).

Belongs to the methyltransferase superfamily. Tam family.

The protein resides in the cytoplasm. It carries out the reaction trans-aconitate + S-adenosyl-L-methionine = (E)-3-(methoxycarbonyl)pent-2-enedioate + S-adenosyl-L-homocysteine. Catalyzes the S-adenosylmethionine monomethyl esterification of trans-aconitate. In Mycolicibacterium gilvum (strain PYR-GCK) (Mycobacterium gilvum (strain PYR-GCK)), this protein is Trans-aconitate 2-methyltransferase.